The following is a 126-amino-acid chain: Fluoride-specific ion channel FluC (126 aa).

Helical transmembrane passes span leucine 4 to tryptophan 24, glycine 36 to leucine 56, leucine 67 to tyrosine 85, and alanine 101 to valine 121. Na(+) is bound by residues glycine 75 and threonine 78.

The protein belongs to the fluoride channel Fluc/FEX (TC 1.A.43) family.

The protein resides in the cell inner membrane. The enzyme catalyses fluoride(in) = fluoride(out). With respect to regulation, na(+) is not transported, but it plays an essential structural role and its presence is essential for fluoride channel function. Fluoride-specific ion channel. Important for reducing fluoride concentration in the cell, thus reducing its toxicity. This chain is Fluoride-specific ion channel FluC, found in Anaeromyxobacter dehalogenans (strain 2CP-1 / ATCC BAA-258).